Consider the following 558-residue polypeptide: Glutamine--tRNA ligase (558 aa).

Positions 36–46 match the 'HIGH' region motif; sequence PEPNGYLHIGH. ATP is bound by residues 37 to 39 and 43 to 49; these read EPN and HIGHAKS. The L-glutamine site is built by aspartate 69 and tyrosine 214. Residues threonine 233, 263 to 264, and 271 to 273 contribute to the ATP site; these read RL and LSK. Residues 270–274 carry the 'KMSKS' region motif; the sequence is LLSKR.

Belongs to the class-I aminoacyl-tRNA synthetase family. As to quaternary structure, monomer.

It is found in the cytoplasm. The catalysed reaction is tRNA(Gln) + L-glutamine + ATP = L-glutaminyl-tRNA(Gln) + AMP + diphosphate. This Bradyrhizobium diazoefficiens (strain JCM 10833 / BCRC 13528 / IAM 13628 / NBRC 14792 / USDA 110) protein is Glutamine--tRNA ligase.